The following is a 277-amino-acid chain: Small ribosomal subunit protein uS2 (277 aa).

2 stretches are compositionally biased toward basic and acidic residues: residues 227 to 256 (QARA…RTEA) and 267 to 277 (SEAKAEGNTEA). The tract at residues 227–277 (QARAERQEAAAKEAAGDADKAPAEAERTEAPAEEAPAEAQSEAKAEGNTEA) is disordered.

This sequence belongs to the universal ribosomal protein uS2 family.

This chain is Small ribosomal subunit protein uS2, found in Corynebacterium jeikeium (strain K411).